Here is a 338-residue protein sequence, read N- to C-terminus: Cell division protein ZipA (338 aa).

Topologically, residues 1-2 are periplasmic; sequence MS. A helical membrane pass occupies residues 3–23; that stretch reads LREWLIAIGTLVIIGIVIDGV. Residues 24–338 are Cytoplasmic-facing; the sequence is RRMRRARKES…FERKQRSQRA (315 aa). The segment at 33–192 is disordered; the sequence is SMAISSGMGA…RKNQPLAGAN (160 aa). 2 stretches are compositionally biased toward basic and acidic residues: residues 70 to 81 and 138 to 162; these read TLEDRGYLKRDM and EVDR…RAEE.

This sequence belongs to the ZipA family. As to quaternary structure, interacts with FtsZ via their C-terminal domains.

It is found in the cell inner membrane. Functionally, essential cell division protein that stabilizes the FtsZ protofilaments by cross-linking them and that serves as a cytoplasmic membrane anchor for the Z ring. Also required for the recruitment to the septal ring of downstream cell division proteins. This chain is Cell division protein ZipA, found in Marinobacter nauticus (strain ATCC 700491 / DSM 11845 / VT8) (Marinobacter aquaeolei).